A 131-amino-acid polypeptide reads, in one-letter code: Large ribosomal subunit protein bL17 (131 aa).

Belongs to the bacterial ribosomal protein bL17 family. Part of the 50S ribosomal subunit. Contacts protein L32.

The sequence is that of Large ribosomal subunit protein bL17 from Chromobacterium violaceum (strain ATCC 12472 / DSM 30191 / JCM 1249 / CCUG 213 / NBRC 12614 / NCIMB 9131 / NCTC 9757 / MK).